The chain runs to 846 residues: MESGPRVEPGPGAPAAVLARIPQEPRPSPEGDPSPPPPPTPMSALVPDTPPDTPPALKTATNPKQLPLEPGNPTGQISPQPAPPQEECPSSEAKSRGPTPTATGPREAKPSRRSSQPSPTTVPASDSPPAKQDVKKAGERHKLAKERREERAKYLAAKKAVWLEKEEKAKALREKQLQERRRRLEEQRLKAEQRRAALEERQRQKLEKNKERYEAAIQRSVKKTWAEIRQQRWSWAGALHHSSPGRKTSGSRCSVSAVNLPKHVDSIINKRLSKSSATLWNSPSRNRSLQLSAWESSIVDRLMTPTLSFLARSRSAVTLPRNGRDQGRGSGPGRRPTRARAGASLAPGPHPDRTHPSAAVPVCPRSASASPLTPCSAPRSAHRCTPSGERPERRKPGAGGSPALARRRLEATPVQKKEKKDKERENEKEKSALARERNLKKRQSLPASIRPRLSTGSELSPKSKARPSSPSTTWHRPASPCPSPGPGHALPPKPPSPRGTTASPKGRVRRKEEAKESPSPSGPEDKNHRKSRAAEEKEPAAPASPAPSPVPSPTPAQPQKEQSSTQIPAETAVPAVPAAPTAPPTAAPSVTPSKPMAGTTDREEATRLLAEKRRQAREQREREEQERKLQAERDKRMREEQLAREAEARAEREAEARRREEQEAREKAQAEQEEQERLQKQKEEAEARSREEAERQRQEREKHFQKEEQERQERRKRLEEIMKRTRKSEAAETKKQDAKETAANNSGPDPVKAVETRPSGLQKDSMQKEELAPQEPQWSLPSKEMPGSLVNGLQPLPAHQENGFSPKGTAGDKSLGRTAEGLLPFAEAEAFLKKAVVQPPQVTEVL.

Disordered regions lie at residues 1–153 and 186–210; these read MESG…ERAK and EQRL…EKNK. Pro residues predominate over residues 24–41; sequence EPRPSPEGDPSPPPPPTP. Phosphothreonine is present on residues T49 and T53. S95 carries the post-translational modification Phosphoserine. T99 is modified (phosphothreonine). Positions 113–123 are enriched in low complexity; that stretch reads RSSQPSPTTVP. A phosphoserine mark is found at S115 and S118. T120 is subject to Phosphothreonine. Residues S125 and S127 each carry the phosphoserine modification. A coiled-coil region spans residues 130 to 224; the sequence is AKQDVKKAGE…AAIQRSVKKT (95 aa). Basic and acidic residues predominate over residues 132-153; sequence QDVKKAGERHKLAKERREERAK. Phosphoserine occurs at positions 256, 275, 315, 368, and 401. Residues 318–816 are disordered; the sequence is TLPRNGRDQG…KGTAGDKSLG (499 aa). The segment covering 407–437 has biased composition (basic and acidic residues); the sequence is RRLEATPVQKKEKKDKERENEKEKSALARER. A coiled-coil region spans residues 414–443; sequence VQKKEKKDKERENEKEKSALARERNLKKRQ. Phosphoserine is present on residues S444, S448, S454, and S460. The span at 460–471 shows a compositional bias: low complexity; the sequence is SPKSKARPSSPS. K462 participates in a covalent cross-link: Glycyl lysine isopeptide (Lys-Gly) (interchain with G-Cter in SUMO2). 2 positions are modified to phosphoserine: S479 and S496. A compositionally biased stretch (pro residues) spans 479-497; it reads SPCPSPGPGHALPPKPPSP. Residues 523-539 are compositionally biased toward basic and acidic residues; the sequence is PEDKNHRKSRAAEEKEP. The segment covering 542–556 has biased composition (pro residues); the sequence is PASPAPSPVPSPTPA. Phosphoserine occurs at positions 544, 548, and 552. T554 is subject to Phosphothreonine. The span at 568 to 579 shows a compositional bias: low complexity; it reads PAETAVPAVPAA. Residues 599 to 740 are a coiled coil; the sequence is TTDREEATRL…AETKKQDAKE (142 aa). The span at 600–740 shows a compositional bias: basic and acidic residues; that stretch reads TDREEATRLL…AETKKQDAKE (141 aa). Phosphothreonine is present on T818.

It belongs to the MAP7 family.

The protein localises to the cytoplasm. It localises to the cytoskeleton. Its subcellular location is the spindle. The protein resides in the microtubule organizing center. It is found in the centrosome. The protein localises to the midbody. Its function is as follows. Microtubule-stabilizing protein involved in the control of cell motility and neurite outgrowth. Facilitate microtubule stabilization through the maintenance of acetylated stable microtubules. The sequence is that of MAP7 domain-containing protein 1 (Map7d1) from Mus musculus (Mouse).